Here is a 417-residue protein sequence, read N- to C-terminus: MDIIEDLKWRGSIKQTTDESGLANLLKHKKISLYVGVDPTAKSIHIGNLIPLTILKRFQNAGHRPVIVVGGGTGMIGDPSGKASERKLLPKDVFDENVSRITKQMTRLFGKDGFEIVNNYDWLSKLDLISFLRDYGKLFSINVMLKRDVVASRLQAGISFTEFTYQILQAIDFYTLFKEKAVQLQVGGADQYGNISSGVELIHKLVGPDTEAFGLTVPLLLKSDGTKFGKSAGGAIWLDPEFLSPYEFYQFFYNQTDADVVKLLKIFTFLNREEIEELADKVKNEPEKREAQRRLAEEVTKFVHGQTAVEEAGKISRILFNGDVENLTASQVAVAFSGVPTIEVADQKTDVVELLVKDKVIEKSRRQAREDLKNGAITINGEKISNVNGVIDPTEKFDGRFIIIRRGKKKYFLAKVQ.

Tyrosine 34 is a binding site for L-tyrosine. Positions 39–48 match the 'HIGH' region motif; it reads PTAKSIHIGN. Positions 165 and 169 each coordinate L-tyrosine. The short motif at 227-231 is the 'KMSKS' region element; sequence KFGKS. Lysine 230 provides a ligand contact to ATP. The S4 RNA-binding domain occupies 349 to 416; that stretch reads TDVVELLVKD…GKKKYFLAKV (68 aa).

This sequence belongs to the class-I aminoacyl-tRNA synthetase family. TyrS type 1 subfamily. Homodimer.

The protein resides in the cytoplasm. The catalysed reaction is tRNA(Tyr) + L-tyrosine + ATP = L-tyrosyl-tRNA(Tyr) + AMP + diphosphate + H(+). In terms of biological role, catalyzes the attachment of tyrosine to tRNA(Tyr) in a two-step reaction: tyrosine is first activated by ATP to form Tyr-AMP and then transferred to the acceptor end of tRNA(Tyr). This Oenococcus oeni (strain ATCC BAA-331 / PSU-1) protein is Tyrosine--tRNA ligase.